The sequence spans 241 residues: Probable transcriptional regulatory protein stu0195 (241 aa).

This sequence belongs to the TACO1 family. YeeN subfamily.

Its subcellular location is the cytoplasm. The chain is Probable transcriptional regulatory protein stu0195 from Streptococcus thermophilus (strain ATCC BAA-250 / LMG 18311).